We begin with the raw amino-acid sequence, 226 residues long: Ribonuclease S-7 (226 aa).

The N-terminal stretch at 1-27 (MGITGMIYIVTMVFSLIVLILSSSTVG) is a signal peptide. Gln-36 is a binding site for RNA. Cys-42 and Cys-49 are oxidised to a cystine. His-60 lines the RNA pocket. Catalysis depends on His-60, which acts as the Proton donor. N-linked (GlcNAc...) asparagine; alternate glycosylation is found at Asn-74 and Asn-77. A disulfide bond links Cys-75 and Cys-119. RNA-binding positions include 98-99 (NV), Phe-108, 111-112 (KQ), and 115-116 (KH). Residue Gln-112 is part of the active site. The active-site Proton acceptor is the His-116. N-linked (GlcNAc...) asparagine glycans are attached at residues Asn-126, Asn-144, and Asn-172. 2 disulfides stabilise this stretch: Cys-183–Cys-220 and Cys-198–Cys-209.

Belongs to the RNase T2 family. Post-translationally, the N-glycans attached at Asn-74 and Asn-77 consist of either monosaccharide (GlcNAc) or disaccharide (GlcNAc-GlcNAc) that could not be distinguished. The N-glycan at Asn-144 contains mannose and xylose, and at Asn-126 contains mannose, xylose and fucose. The N-glycan at Asn-172 consists of disaccharide (GlcNAc-GlcNAc).

The catalysed reaction is a ribonucleotidyl-ribonucleotide-RNA + H2O = a 3'-end 3'-phospho-ribonucleotide-RNA + a 5'-end dephospho-ribonucleoside-RNA + H(+). Self-incompatibility (SI) is the inherited ability of a flowering plant to prevent self-fertilization by discriminating between self and non-self pollen during pollination. In many species, self-incompatibility is controlled by the single, multiallelic locus S. The sequence is that of Ribonuclease S-7 from Pyrus pyrifolia (Chinese pear).